A 215-amino-acid polypeptide reads, in one-letter code: Adenylate kinase (215 aa).

10-15 contributes to the ATP binding site; the sequence is GAGKGT. The tract at residues 30 to 59 is NMP; sequence STGDMFRAAMKNETEMGKLAKSFIDKGELV. AMP is bound by residues Thr-31, Arg-36, 57 to 59, 86 to 89, and Gln-93; these read ELV and GYPR. The LID stretch occupies residues 127-165; it reads GRYICRNCGATYHKIFNPTKVEGTCDVCGSHDLYQRADD. Arg-128 contacts ATP. Zn(2+) is bound by residues Cys-131 and Cys-134. Position 137–138 (137–138) interacts with ATP; it reads TY. Zn(2+)-binding residues include Cys-151 and Cys-154. Positions 162 and 173 each coordinate AMP. Gln-201 lines the ATP pocket.

Belongs to the adenylate kinase family. Monomer.

The protein localises to the cytoplasm. The catalysed reaction is AMP + ATP = 2 ADP. It functions in the pathway purine metabolism; AMP biosynthesis via salvage pathway; AMP from ADP: step 1/1. Functionally, catalyzes the reversible transfer of the terminal phosphate group between ATP and AMP. Plays an important role in cellular energy homeostasis and in adenine nucleotide metabolism. This Lactococcus lactis subsp. cremoris (strain SK11) protein is Adenylate kinase.